A 161-amino-acid polypeptide reads, in one-letter code: uncharacterized protein (161 aa).

The protein belongs to the M.jannaschii MJ0150/MJ0739/MJ0745/MJ1460/MJ1642 family.

This is an uncharacterized protein from Methanocaldococcus jannaschii (strain ATCC 43067 / DSM 2661 / JAL-1 / JCM 10045 / NBRC 100440) (Methanococcus jannaschii).